Reading from the N-terminus, the 333-residue chain is Cell shape-determining protein Mbl (333 aa).

ATP contacts are provided by residues 12 to 14 (TAN), 156 to 158 (GGT), 204 to 207 (EDIK), and 284 to 287 (GGAL).

This sequence belongs to the FtsA/MreB family. Forms polymers. Forms a complex with MreB and MreBH. Interacts with MreC.

The protein localises to the cytoplasm. Functionally, forms membrane-associated dynamic filaments that are essential for cell shape determination. Acts by regulating cell wall synthesis and cell elongation, and thus cell shape. A feedback loop between cell geometry and Mbl localization may maintain elongated cell shape by targeting cell wall growth to regions of negative cell wall curvature. Filaments rotate around the cell circumference in concert with the cell wall synthesis enzymes. The process is driven by the cell wall synthesis machinery and does not depend on Mbl polymerization. Organizes peptidoglycan synthesis in the lateral cell wall. Also required for proper chromosome segregation. The sequence is that of Cell shape-determining protein Mbl (mbl) from Bacillus subtilis (strain 168).